Here is a 299-residue protein sequence, read N- to C-terminus: Pantothenate synthetase (299 aa).

41 to 48 (MGALHEGH) provides a ligand contact to ATP. H48 acts as the Proton donor in catalysis. Q72 provides a ligand contact to (R)-pantoate. Residue Q72 coordinates beta-alanine. 158 to 161 (GQKD) contributes to the ATP binding site. Q164 is a (R)-pantoate binding site. ATP contacts are provided by residues V187 and 195–198 (MSSR).

The protein belongs to the pantothenate synthetase family. In terms of assembly, homodimer.

It is found in the cytoplasm. The enzyme catalyses (R)-pantoate + beta-alanine + ATP = (R)-pantothenate + AMP + diphosphate + H(+). It participates in cofactor biosynthesis; (R)-pantothenate biosynthesis; (R)-pantothenate from (R)-pantoate and beta-alanine: step 1/1. Functionally, catalyzes the condensation of pantoate with beta-alanine in an ATP-dependent reaction via a pantoyl-adenylate intermediate. The chain is Pantothenate synthetase from Acidobacterium capsulatum (strain ATCC 51196 / DSM 11244 / BCRC 80197 / JCM 7670 / NBRC 15755 / NCIMB 13165 / 161).